The primary structure comprises 92 residues: Small ribosomal subunit protein uS19 (92 aa).

Belongs to the universal ribosomal protein uS19 family.

In terms of biological role, protein S19 forms a complex with S13 that binds strongly to the 16S ribosomal RNA. The sequence is that of Small ribosomal subunit protein uS19 from Geobacillus kaustophilus (strain HTA426).